We begin with the raw amino-acid sequence, 899 residues long: Bifunctional uridylyltransferase/uridylyl-removing enzyme (899 aa).

Residues 1–342 (MPQMDPELFD…RAGESGPATP (342 aa)) form a uridylyltransferase region. Residues 343–705 (LNSRFQVRDG…TTQREFEGGT (363 aa)) form a uridylyl-removing region. The HD domain occupies 461–583 (VDAHTLNLIK…VGDQTHLDYL (123 aa)). ACT domains are found at residues 706–784 (QIFI…DEYP) and 816–897 (ILEL…SLQI).

Belongs to the GlnD family. Mg(2+) serves as cofactor.

The catalysed reaction is [protein-PII]-L-tyrosine + UTP = [protein-PII]-uridylyl-L-tyrosine + diphosphate. It catalyses the reaction [protein-PII]-uridylyl-L-tyrosine + H2O = [protein-PII]-L-tyrosine + UMP + H(+). With respect to regulation, uridylyltransferase (UTase) activity is inhibited by glutamine, while glutamine activates uridylyl-removing (UR) activity. Its function is as follows. Modifies, by uridylylation and deuridylylation, the PII regulatory proteins (GlnB and homologs), in response to the nitrogen status of the cell that GlnD senses through the glutamine level. Under low glutamine levels, catalyzes the conversion of the PII proteins and UTP to PII-UMP and PPi, while under higher glutamine levels, GlnD hydrolyzes PII-UMP to PII and UMP (deuridylylation). Thus, controls uridylylation state and activity of the PII proteins, and plays an important role in the regulation of nitrogen assimilation and metabolism. The protein is Bifunctional uridylyltransferase/uridylyl-removing enzyme of Ectopseudomonas mendocina (strain ymp) (Pseudomonas mendocina).